A 159-amino-acid chain; its full sequence is Putative transcriptional regulatory protein rrnAC0199 (159 aa).

Belongs to the Tfx family.

In terms of biological role, putative transcriptional regulator. This chain is Putative transcriptional regulatory protein rrnAC0199, found in Haloarcula marismortui (strain ATCC 43049 / DSM 3752 / JCM 8966 / VKM B-1809) (Halobacterium marismortui).